The chain runs to 327 residues: Apoptosis facilitator Bcl-2-like protein 14 (327 aa).

Ser-44 carries the post-translational modification Phosphoserine. A BH3 motif is present at residues 212 to 226 (IVELLKYSGDQLERK). Residues 308–315 (WIQQHGGW) carry the BH2 motif.

Belongs to the Bcl-2 family. Post-translationally, phosphorylated by MELK, leading to inhibit its pro-apoptotic function. In terms of tissue distribution, isoform 1 is widely expressed. Isoform 2 is testis-specific.

The protein localises to the cytoplasm. It localises to the cytosol. Its subcellular location is the endomembrane system. In terms of biological role, plays a role in apoptosis. The sequence is that of Apoptosis facilitator Bcl-2-like protein 14 (BCL2L14) from Homo sapiens (Human).